A 398-amino-acid polypeptide reads, in one-letter code: Formate-dependent phosphoribosylglycinamide formyltransferase (398 aa).

Residues 21 to 22 (EL) and glutamate 81 each bind N(1)-(5-phospho-beta-D-ribosyl)glycinamide. ATP contacts are provided by residues arginine 113, lysine 154, 194 to 197 (EEYV), and glutamate 202. The ATP-grasp domain occupies 118-314 (RFAAEKVKVP…EFQVHVRSAL (197 aa)). Positions 273 and 285 each coordinate Mg(2+). Residues aspartate 292, lysine 362, and 369–370 (RR) each bind N(1)-(5-phospho-beta-D-ribosyl)glycinamide.

Belongs to the PurK/PurT family. In terms of assembly, homodimer.

It catalyses the reaction N(1)-(5-phospho-beta-D-ribosyl)glycinamide + formate + ATP = N(2)-formyl-N(1)-(5-phospho-beta-D-ribosyl)glycinamide + ADP + phosphate + H(+). The protein operates within purine metabolism; IMP biosynthesis via de novo pathway; N(2)-formyl-N(1)-(5-phospho-D-ribosyl)glycinamide from N(1)-(5-phospho-D-ribosyl)glycinamide (formate route): step 1/1. Involved in the de novo purine biosynthesis. Catalyzes the transfer of formate to 5-phospho-ribosyl-glycinamide (GAR), producing 5-phospho-ribosyl-N-formylglycinamide (FGAR). Formate is provided by PurU via hydrolysis of 10-formyl-tetrahydrofolate. This chain is Formate-dependent phosphoribosylglycinamide formyltransferase, found in Sulfolobus acidocaldarius (strain ATCC 33909 / DSM 639 / JCM 8929 / NBRC 15157 / NCIMB 11770).